A 179-amino-acid chain; its full sequence is Protein LDB18 (179 aa).

Its function is as follows. May be involved in protein-linked oligosaccharide phosphorylation since the deletion reduces the negative charge of the cell surface. The polypeptide is Protein LDB18 (LDB18) (Saccharomyces cerevisiae (strain ATCC 204508 / S288c) (Baker's yeast)).